The chain runs to 570 residues: Zinc finger and BTB domain-containing protein 44 (570 aa).

A Glycyl lysine isopeptide (Lys-Gly) (interchain with G-Cter in SUMO2) cross-link involves residue K4. One can recognise a BTB domain in the interval 31 to 98 (CDITIRVQDK…AYTATLSINT (68 aa)). 6 positions are modified to phosphoserine: S135, S159, S161, S165, S191, and S194. Disordered regions lie at residues 194–220 (SPVK…NRNQ) and 243–267 (EKVK…RRMA). Positions 199–220 (GTQTSSPQVLNSSASYSENRNQ) are enriched in polar residues. T200 carries the post-translational modification Phosphothreonine. K290 participates in a covalent cross-link: Glycyl lysine isopeptide (Lys-Gly) (interchain with G-Cter in SUMO2). A disordered region spans residues 295-369 (SDEEVHEEVS…NAPPDDDDRL (75 aa)). The segment covering 304 to 318 (SQPVSASQSSLSDQQ) has biased composition (low complexity). Polar residues predominate over residues 352–361 (TLQSTSSTNA). 4 C2H2-type zinc fingers span residues 399–421 (FQCP…MLIH), 427–449 (FQCD…RLKH), 455–479 (FRCQ…VSRH), and 487–511 (YECK…SLNH).

It localises to the nucleus. Functionally, may be involved in transcriptional regulation. The polypeptide is Zinc finger and BTB domain-containing protein 44 (ZBTB44) (Homo sapiens (Human)).